We begin with the raw amino-acid sequence, 405 residues long: Riboflavin biosynthesis protein RibBA (405 aa).

The interval 1–205 (MEQIKLDSIA…IKDLIEYRLT (205 aa)) is DHBP synthase. D-ribulose 5-phosphate is bound by residues 30-31 (RE), D35, 144-148 (RVGHT), and E168. E31 contacts Mg(2+). Position 147 (H147) interacts with Mg(2+). The tract at residues 206 to 405 (HESLVKREIG…KMGHTILKKD (200 aa)) is GTP cyclohydrolase II. 256 to 260 (RVHSS) is a binding site for GTP. The Zn(2+) site is built by C261, C272, and C274. GTP-binding positions include Q277, 299-301 (EGR), and T321. D333 (proton acceptor; for GTP cyclohydrolase activity) is an active-site residue. The active-site Nucleophile; for GTP cyclohydrolase activity is R335. Residues T356 and K361 each contribute to the GTP site.

This sequence in the N-terminal section; belongs to the DHBP synthase family. It in the C-terminal section; belongs to the GTP cyclohydrolase II family. Requires Mg(2+) as cofactor. The cofactor is Mn(2+). Zn(2+) serves as cofactor.

The enzyme catalyses D-ribulose 5-phosphate = (2S)-2-hydroxy-3-oxobutyl phosphate + formate + H(+). It catalyses the reaction GTP + 4 H2O = 2,5-diamino-6-hydroxy-4-(5-phosphoribosylamino)-pyrimidine + formate + 2 phosphate + 3 H(+). It functions in the pathway cofactor biosynthesis; riboflavin biosynthesis; 2-hydroxy-3-oxobutyl phosphate from D-ribulose 5-phosphate: step 1/1. It participates in cofactor biosynthesis; riboflavin biosynthesis; 5-amino-6-(D-ribitylamino)uracil from GTP: step 1/4. Its function is as follows. Catalyzes the conversion of D-ribulose 5-phosphate to formate and 3,4-dihydroxy-2-butanone 4-phosphate. Catalyzes the conversion of GTP to 2,5-diamino-6-ribosylamino-4(3H)-pyrimidinone 5'-phosphate (DARP), formate and pyrophosphate. This Cytophaga hutchinsonii (strain ATCC 33406 / DSM 1761 / CIP 103989 / NBRC 15051 / NCIMB 9469 / D465) protein is Riboflavin biosynthesis protein RibBA.